Reading from the N-terminus, the 212-residue chain is Adenylate kinase (212 aa).

Residue 14–19 (GSGKGT) participates in ATP binding. Residues 34–63 (STGDLFRKKISEDSRFAAQIQNYLSSGSYV) form an NMP region. AMP is bound by residues Thr-35, Arg-40, 61-63 (SYV), 89-92 (GYPR), and Gln-96. The segment at 126 to 163 (QRLFCQKCQKSYNLLLAKPKNGLKCDLDNTDLITRNDD) is LID. Arg-127 is an ATP binding site. Zn(2+) contacts are provided by Cys-130 and Cys-133. 136-137 (SY) contributes to the ATP binding site. The Zn(2+) site is built by Cys-150 and Asp-153. Positions 160 and 171 each coordinate AMP. Gln-199 is an ATP binding site.

The protein belongs to the adenylate kinase family. Monomer.

It localises to the cytoplasm. It catalyses the reaction AMP + ATP = 2 ADP. Its pathway is purine metabolism; AMP biosynthesis via salvage pathway; AMP from ADP: step 1/1. In terms of biological role, catalyzes the reversible transfer of the terminal phosphate group between ATP and AMP. Plays an important role in cellular energy homeostasis and in adenine nucleotide metabolism. The sequence is that of Adenylate kinase from Mesomycoplasma hyopneumoniae (strain 232) (Mycoplasma hyopneumoniae).